The following is a 218-amino-acid chain: Sodium channel regulatory subunit beta-1 (218 aa).

A signal peptide spans 1 to 18; sequence MGRLLAFVVGAALVSSAW. The Extracellular segment spans residues 19–157; it reads GGCVEVDSET…DKANRDMASI (139 aa). Cystine bridges form between C21/C43 and C40/C121. The Ig-like C2-type domain maps to 22–150; that stretch reads VEVDSETEAV…KIHLEVVDKA (129 aa). N93, N110, N114, and N135 each carry an N-linked (GlcNAc...) asparagine glycan. Residues 158 to 179 traverse the membrane as a helical segment; that stretch reads VSEIMMYVLIVVLTIWLVAEMV. Over 180–218 the chain is Cytoplasmic; the sequence is YCYKKIAAATEAAAQENASEYLAITSESKENCTGVQVAE.

This sequence belongs to the sodium channel auxiliary subunit SCN1B (TC 8.A.17) family. In terms of assembly, a voltage-gated sodium (Nav) channel consists of an ion-conducting pore-forming alpha subunit functional on its own that is regulated by one or more beta subunits. Interacts with SCN1A; regulatory subunit of SCN1A/Nav1.1. Interacts with SCN3A; regulatory subunit of SCN3A/Nav1.3. Interacts with SCN4A; regulatory subunit of SCN4A/Nav1.4. Interacts with SCN5A; regulatory subunit of SCN5A/Nav1.5. Interacts with SCN8A; regulatory subunit of SCN8A/Nav1.6. Interacts with SCN9A; regulatory subunit of SCN9A/Nav1.7. Interacts with SCN10A; regulatory subunit of SCN10A/Nav1.8. Interacts with NFASC. Interacts with TMEM65.

It localises to the cell membrane. It is found in the perikaryon. The protein localises to the cell projection. The protein resides in the axon. Regulatory subunit of multiple voltage-gated sodium (Nav) channels directly mediating the depolarization of excitable membranes. Navs, also called VGSCs (voltage-gated sodium channels) or VDSCs (voltage-dependent sodium channels), operate by switching between closed and open conformations depending on the voltage difference across the membrane. In the open conformation they allow Na(+) ions to selectively pass through the pore, along their electrochemical gradient. The influx of Na+ ions provokes membrane depolarization, initiating the propagation of electrical signals throughout cells and tissues. The accessory beta subunits participate in localization and functional modulation of the Nav channels. Modulates the activity of SCN1A/Nav1.1, SCN2A/Nav1.2, SCN3A/Nav1.3, SCN4A/Nav1.4, SCN5A/Nav1.5, SCN8A/Nav1.6, SCN9A/Nav1.7 and SCN10A/Nav1.8. In Oryctolagus cuniculus (Rabbit), this protein is Sodium channel regulatory subunit beta-1.